Here is a 448-residue protein sequence, read N- to C-terminus: SET domain-containing protein SmydA-8, isoform B (448 aa).

Residues 42–273 enclose the SET domain; that stretch reads PSWRVADSPI…AGAEITMSYA (232 aa).

This sequence belongs to the class V-like SAM-binding methyltransferase superfamily.

This Drosophila melanogaster (Fruit fly) protein is SET domain-containing protein SmydA-8, isoform B.